The following is a 149-amino-acid chain: Putative pre-16S rRNA nuclease (149 aa).

This sequence belongs to the YqgF nuclease family.

The protein resides in the cytoplasm. Its function is as follows. Could be a nuclease involved in processing of the 5'-end of pre-16S rRNA. This is Putative pre-16S rRNA nuclease from Burkholderia ambifaria (strain MC40-6).